The primary structure comprises 441 residues: Glutamate--tRNA ligase 2 (441 aa).

The short motif at 8 to 18 (PSPTGYIHVGN) is the 'HIGH' region element. Positions 239 to 243 (ALSKR) match the 'KMSKS' region motif. ATP is bound at residue Lys-242.

It belongs to the class-I aminoacyl-tRNA synthetase family. Glutamate--tRNA ligase type 1 subfamily. As to quaternary structure, monomer.

It localises to the cytoplasm. The catalysed reaction is tRNA(Glu) + L-glutamate + ATP = L-glutamyl-tRNA(Glu) + AMP + diphosphate. Its function is as follows. Catalyzes the attachment of glutamate to tRNA(Glu) in a two-step reaction: glutamate is first activated by ATP to form Glu-AMP and then transferred to the acceptor end of tRNA(Glu). In Ruegeria sp. (strain TM1040) (Silicibacter sp.), this protein is Glutamate--tRNA ligase 2.